The primary structure comprises 292 residues: tRNA (guanine-N(7)-)-methyltransferase (292 aa).

A disordered region spans residues 1–54 (MLKRDQSEMDIEAETANMGKEEKESFVHKRQKYRQEQEEKRLAAKKGVSFEQPE). Residues 19-42 (GKEEKESFVHKRQKYRQEQEEKRL) are compositionally biased toward basic and acidic residues. S-adenosyl-L-methionine is bound by residues G110, 133 to 134 (EI), 168 to 169 (NA), and C188. Residue D191 is part of the active site. 266 to 268 (TEE) is an S-adenosyl-L-methionine binding site.

This sequence belongs to the class I-like SAM-binding methyltransferase superfamily. TrmB family. As to quaternary structure, forms a complex with TRM82.

Its subcellular location is the nucleus. It carries out the reaction guanosine(46) in tRNA + S-adenosyl-L-methionine = N(7)-methylguanosine(46) in tRNA + S-adenosyl-L-homocysteine. Its pathway is tRNA modification; N(7)-methylguanine-tRNA biosynthesis. In terms of biological role, catalyzes the formation of N(7)-methylguanine at position 46 (m7G46) in tRNA. This Yarrowia lipolytica (strain CLIB 122 / E 150) (Yeast) protein is tRNA (guanine-N(7)-)-methyltransferase.